The chain runs to 159 residues: Large ribosomal subunit protein uL10 (159 aa).

Belongs to the universal ribosomal protein uL10 family. As to quaternary structure, part of the ribosomal stalk of the 50S ribosomal subunit. The N-terminus interacts with L11 and the large rRNA to form the base of the stalk. The C-terminus forms an elongated spine to which L12 dimers bind in a sequential fashion forming a multimeric L10(L12)X complex.

Functionally, forms part of the ribosomal stalk, playing a central role in the interaction of the ribosome with GTP-bound translation factors. The chain is Large ribosomal subunit protein uL10 from Campylobacter lari (strain RM2100 / D67 / ATCC BAA-1060).